The primary structure comprises 617 residues: Leucine aminopeptidase 2 (617 aa).

A peptide contacts are provided by residues 139–141 and 271–276; these read QCQ and PYGGME. A Zn(2+)-binding site is contributed by His300. The active-site Proton acceptor is the Glu301. 2 residues coordinate Zn(2+): His304 and Glu323. Residue Tyr388 is the Proton donor of the active site.

It belongs to the peptidase M1 family. Requires Zn(2+) as cofactor.

It is found in the cytoplasm. The protein resides in the nucleus. It carries out the reaction an epoxide + H2O = an ethanediol. In terms of biological role, aminopeptidase that preferentially cleaves di- and tripeptides. Also has low epoxide hydrolase activity (in vitro). Can hydrolyze the epoxide leukotriene LTA(4) but it forms preferentially 5,6-dihydroxy-7,9,11,14-eicosatetraenoic acid rather than the cytokine leukotriene B(4) as the product compared to the homologous mammalian enzyme (in vitro). This chain is Leucine aminopeptidase 2, found in Neosartorya fischeri (strain ATCC 1020 / DSM 3700 / CBS 544.65 / FGSC A1164 / JCM 1740 / NRRL 181 / WB 181) (Aspergillus fischerianus).